The chain runs to 111 residues: Aspartate 1-decarboxylase (111 aa).

Serine 25 functions as the Schiff-base intermediate with substrate; via pyruvic acid in the catalytic mechanism. Serine 25 is subject to Pyruvic acid (Ser). Threonine 57 provides a ligand contact to substrate. Catalysis depends on tyrosine 58, which acts as the Proton donor. A substrate-binding site is contributed by 73 to 75; that stretch reads GPA.

Belongs to the PanD family. In terms of assembly, heterooctamer of four alpha and four beta subunits. Requires pyruvate as cofactor. Is synthesized initially as an inactive proenzyme, which is activated by self-cleavage at a specific serine bond to produce a beta-subunit with a hydroxyl group at its C-terminus and an alpha-subunit with a pyruvoyl group at its N-terminus.

Its subcellular location is the cytoplasm. The enzyme catalyses L-aspartate + H(+) = beta-alanine + CO2. Its pathway is cofactor biosynthesis; (R)-pantothenate biosynthesis; beta-alanine from L-aspartate: step 1/1. In terms of biological role, catalyzes the pyruvoyl-dependent decarboxylation of aspartate to produce beta-alanine. The protein is Aspartate 1-decarboxylase of Francisella tularensis subsp. tularensis (strain FSC 198).